Here is a 276-residue protein sequence, read N- to C-terminus: Light-independent protochlorophyllide reductase iron-sulfur ATP-binding protein (276 aa).

Residues G12 to T17 and K41 contribute to the ATP site. Residue S16 coordinates Mg(2+). Positions 97 and 131 each coordinate [4Fe-4S] cluster. N182 to R183 provides a ligand contact to ATP.

Belongs to the NifH/BchL/ChlL family. In terms of assembly, homodimer. Protochlorophyllide reductase is composed of three subunits; BchL, BchN and BchB. [4Fe-4S] cluster is required as a cofactor.

The enzyme catalyses chlorophyllide a + oxidized 2[4Fe-4S]-[ferredoxin] + 2 ADP + 2 phosphate = protochlorophyllide a + reduced 2[4Fe-4S]-[ferredoxin] + 2 ATP + 2 H2O. The protein operates within porphyrin-containing compound metabolism; bacteriochlorophyll biosynthesis (light-independent). Its function is as follows. Component of the dark-operative protochlorophyllide reductase (DPOR) that uses Mg-ATP and reduced ferredoxin to reduce ring D of protochlorophyllide (Pchlide) to form chlorophyllide a (Chlide). This reaction is light-independent. The L component serves as a unique electron donor to the NB-component of the complex, and binds Mg-ATP. The chain is Light-independent protochlorophyllide reductase iron-sulfur ATP-binding protein from Chlorobium luteolum (strain DSM 273 / BCRC 81028 / 2530) (Pelodictyon luteolum).